The chain runs to 511 residues: Histidine ammonia-lyase (511 aa).

Residues 142–144 constitute a cross-link (5-imidazolinone (Ala-Gly)); the sequence is ASG. Position 143 is a 2,3-didehydroalanine (Ser) (S143).

Belongs to the PAL/histidase family. Contains an active site 4-methylidene-imidazol-5-one (MIO), which is formed autocatalytically by cyclization and dehydration of residues Ala-Ser-Gly.

It is found in the cytoplasm. It catalyses the reaction L-histidine = trans-urocanate + NH4(+). Its pathway is amino-acid degradation; L-histidine degradation into L-glutamate; N-formimidoyl-L-glutamate from L-histidine: step 1/3. This chain is Histidine ammonia-lyase, found in Brucella anthropi (strain ATCC 49188 / DSM 6882 / CCUG 24695 / JCM 21032 / LMG 3331 / NBRC 15819 / NCTC 12168 / Alc 37) (Ochrobactrum anthropi).